Reading from the N-terminus, the 245-residue chain is Lytic switch protein BZLF1 (245 aa).

The transactivation stretch occupies residues 1–167; sequence MMDPNSTSED…RTRKPLQPES (167 aa). 2 positions are modified to phosphothreonine: threonine 14 and threonine 159. The disordered stretch occupies residues 140-167; the sequence is QLADIGAPQPAPAAAPARRTRKPLQPES. Residues 157-194 carry the Bipartite nuclear localization signal motif; the sequence is RRTRKPLQPESLEECDSELDIKRYKNRVASRKCRAKFK. 3 positions are modified to phosphoserine: serine 167, serine 173, and serine 186. The basic motif stretch occupies residues 178 to 195; it reads KRYKNRVASRKCRAKFKH. Positions 178 to 228 constitute a bZIP domain; it reads KRYKNRVASRKCRAKFKHLLQHYREVASAKSSENDRLRLLLKQMCPSLDVD. The tract at residues 196–228 is leucine-zipper; sequence LLQHYREVASAKSSENDRLRLLLKQMCPSLDVD. Positions 229–245 are accessory activation domain; the sequence is SIIPRTPDVLHEDLLNF.

Belongs to the bZIP family. In terms of assembly, homodimer. Interacts (via b-ZIP domain) with the DNA polymerase processivity factor BMRF1 (via N-terminus); this interaction may inhibit BZLF1-induced transcription of the BMRF1 promoter. Interacts with human UBN1, CRTC2 and RACK1. Interacts (via N-terminus) with human PAX5 (via N-terminus); this interaction inhibits BZLF1-mediated lytic viral reactivation. Interacts (via leucine-zipper domain) with host CEBPA; this interaction induces G1 host cell cycle arrest. Interacts (via C-terminus) with host TP53BP1 (via C-terminus); this interaction is involved in the activation of the viral lytic cycle. Interacts with host chromatin-remodeling ATPase INO80; this interaction participates to the activation of early lytic viral genes by BZLF1. Interacts with host regulator of chromatin SMARCA5/hSNF2H; this interaction participates to the activation of early lytic viral genes by BZLF1. Interacts with host PLSCR1/Phospholipid scramblase 1; this interaction negatively regulates the transcriptional regulatory activity of BZLF1 by preventing the formation of the BZLF1-CBP complex.

The protein resides in the host nucleus. Its function is as follows. Transcription factor that acts as a molecular switch to induce the transition from the latent to the lytic or productive phase of the virus cycle. Mediates the switch from the latent to the lytic cycle of infection in cells containing a highly methylated viral genome. Probably binds to silenced chromatin and recruits host chromatin-remodeling enzymes. Regulates this switch by binding to 2 types of ZEBRA response elements (ZREs): the CpG-free AP-1 like elements (latency) and the methylated CpG-containing elements (lytic replication). Activates preferentially the methylated forms of the viral lytic R (BRLF1) and Na (BRRF1) gene promoters, the latters being the first genes activated during Z-mediated reactivation in latently infected cells. BZLF1 and BRLF1 act together to trigger lytic replication. Also binds the lytic origin of replication, oriLyt. Induces G1 cell cycle arrest by stabilizing the host CCAAT/enhancer binding protein CEBPA. This function is important because the lytic cycle preferentially takes place in host cells arrested in G1. The polypeptide is Lytic switch protein BZLF1 (Epstein-Barr virus (strain AG876) (HHV-4)).